A 135-amino-acid polypeptide reads, in one-letter code: uncharacterized protein (135 aa).

A disordered region spans residues 56-135 (VQSHNRGINN…QKGQLKIEKV (80 aa)). Residues 64 to 74 (NNRRRDQKRKQ) show a composition bias toward basic residues. Over residues 77 to 89 (SIKQDNDLNVSSE) the composition is skewed to polar residues. Positions 108 to 135 (YKETPDLDEPGSREKRVSQKGQLKIEKV) are enriched in basic and acidic residues.

This is an uncharacterized protein from Schizosaccharomyces pombe (strain 972 / ATCC 24843) (Fission yeast).